The primary structure comprises 212 residues: Thymidylate kinase (212 aa).

An ATP-binding site is contributed by 10–17 (GLEGAGKT).

It belongs to the thymidylate kinase family.

It carries out the reaction dTMP + ATP = dTDP + ADP. Its function is as follows. Phosphorylation of dTMP to form dTDP in both de novo and salvage pathways of dTTP synthesis. In Yersinia enterocolitica serotype O:8 / biotype 1B (strain NCTC 13174 / 8081), this protein is Thymidylate kinase.